The following is a 100-amino-acid chain: Nucleoid-associated protein ckrop_0143 (100 aa).

This sequence belongs to the YbaB/EbfC family. In terms of assembly, homodimer.

It localises to the cytoplasm. The protein resides in the nucleoid. In terms of biological role, binds to DNA and alters its conformation. May be involved in regulation of gene expression, nucleoid organization and DNA protection. The chain is Nucleoid-associated protein ckrop_0143 from Corynebacterium kroppenstedtii (strain DSM 44385 / JCM 11950 / CIP 105744 / CCUG 35717).